We begin with the raw amino-acid sequence, 388 residues long: Dual-specificity RNA methyltransferase RlmN (388 aa).

Glutamate 109 acts as the Proton acceptor in catalysis. The Radical SAM core domain occupies 115 to 354 (EDDRATLCVS…TIVRKTRGDD (240 aa)). An intrachain disulfide couples cysteine 122 to cysteine 359. Residues cysteine 129, cysteine 133, and cysteine 136 each contribute to the [4Fe-4S] cluster site. S-adenosyl-L-methionine contacts are provided by residues 183–184 (GE), serine 215, 237–239 (SLH), and asparagine 316. Cysteine 359 acts as the S-methylcysteine intermediate in catalysis.

Belongs to the radical SAM superfamily. RlmN family. [4Fe-4S] cluster is required as a cofactor.

The protein resides in the cytoplasm. The catalysed reaction is adenosine(2503) in 23S rRNA + 2 reduced [2Fe-2S]-[ferredoxin] + 2 S-adenosyl-L-methionine = 2-methyladenosine(2503) in 23S rRNA + 5'-deoxyadenosine + L-methionine + 2 oxidized [2Fe-2S]-[ferredoxin] + S-adenosyl-L-homocysteine. The enzyme catalyses adenosine(37) in tRNA + 2 reduced [2Fe-2S]-[ferredoxin] + 2 S-adenosyl-L-methionine = 2-methyladenosine(37) in tRNA + 5'-deoxyadenosine + L-methionine + 2 oxidized [2Fe-2S]-[ferredoxin] + S-adenosyl-L-homocysteine. Functionally, specifically methylates position 2 of adenine 2503 in 23S rRNA and position 2 of adenine 37 in tRNAs. m2A2503 modification seems to play a crucial role in the proofreading step occurring at the peptidyl transferase center and thus would serve to optimize ribosomal fidelity. The chain is Dual-specificity RNA methyltransferase RlmN from Salmonella typhi.